Here is a 469-residue protein sequence, read N- to C-terminus: MANYFKAAVKPKTSNQRLTVTVDKLDMNGVGVARWQNKPIFIAGVLPDEIVDVKVIEQKSKYARAKLISIDKQSASRVIPQCQHFGLCGGCDLQMLALEEQLLFKQQKITDLFSRSFSTQNITPEINTAHLPWQAAIKSSPWHYRRKARIGVQFDKNAQATIGFRQKSTNQLAAIKSCPVLVEPLSAIFPLLKKLLAQLTVKSAIGHIEVIQADISDTSSADKIQKDNQVVVVVRQLKPMNDTDIGLWQLYAQRHCWHVIIDDGNKQLPLADIKGGDSFELSYELTDTSKVYFSSNDFIQINHQVNNAMISQALAWLNILATDNVLDLFCGLGNFSLALAKHAKRVVGVEGMQTMVDKATQNSLVNGLDNCQFYQADLNSHWLLEPWVQGQVFDKVLLDPARAGAEQAVSQIAELKIPCVLYVSCDPATLARDSAILVSKGYKLEKISLMDMFSQTKHVETMILFTHTS.

A TRAM domain is found at 11 to 69 (PKTSNQRLTVTVDKLDMNGVGVARWQNKPIFIAGVLPDEIVDVKVIEQKSKYARAKLIS). [4Fe-4S] cluster-binding residues include Cys82, Cys88, Cys91, and Cys178. Residues Gln300, Phe329, Asn334, Glu350, Asp377, and Asp399 each coordinate S-adenosyl-L-methionine. Cys425 functions as the Nucleophile in the catalytic mechanism.

The protein belongs to the class I-like SAM-binding methyltransferase superfamily. RNA M5U methyltransferase family. RlmD subfamily.

The enzyme catalyses uridine(1939) in 23S rRNA + S-adenosyl-L-methionine = 5-methyluridine(1939) in 23S rRNA + S-adenosyl-L-homocysteine + H(+). Functionally, catalyzes the formation of 5-methyl-uridine at position 1939 (m5U1939) in 23S rRNA. This Colwellia psychrerythraea (strain 34H / ATCC BAA-681) (Vibrio psychroerythus) protein is 23S rRNA (uracil(1939)-C(5))-methyltransferase RlmD.